Reading from the N-terminus, the 504-residue chain is Probable periplasmic serine endoprotease DegP-like (504 aa).

The first 26 residues, 1–26 (MLKTTTVAGLAAVLLTTGLPAEVAQS), serve as a signal peptide directing secretion. Residues 102–118 (RADRWRDRRGPRGEGRL) show a composition bias toward basic and acidic residues. The disordered stretch occupies residues 102–122 (RADRWRDRRGPRGEGRLRPRA). The segment at 113 to 286 (RGEGRLRPRA…PASVAKDVVD (174 aa)) is serine protease. Residues His-140, Asp-170, and Ser-244 each act as charge relay system in the active site. Substrate is bound by residues 242–244 (GNS) and 299–303 (LGVQI). 2 consecutive PDZ domains span residues 287-378 (SLIK…LWRS) and 401-491 (ATGE…IEAQ). 2 disordered regions span residues 389–411 (GTLP…DEGQ) and 428–447 (EDGK…AGDR).

It belongs to the peptidase S1C family.

The protein localises to the periplasm. It carries out the reaction Acts on substrates that are at least partially unfolded. The cleavage site P1 residue is normally between a pair of hydrophobic residues, such as Val-|-Val.. Might be efficient in the degradation of transiently denatured and unfolded proteins which accumulate in the periplasm following stress conditions. This is Probable periplasmic serine endoprotease DegP-like (degP1) from Rhizobium meliloti (strain 1021) (Ensifer meliloti).